A 394-amino-acid polypeptide reads, in one-letter code: Elongation factor Tu (394 aa).

The region spanning 10–204 is the tr-type G domain; sequence RTHINVGTIG…ILDNYIPEPK (195 aa). The interval 19-26 is G1; the sequence is GHVDHGKT. GTP is bound at residue 19–26; it reads GHVDHGKT. Thr-26 contacts Mg(2+). The G2 stretch occupies residues 60 to 64; it reads GITIN. The segment at 81–84 is G3; sequence DCPG. Residues 81-85 and 136-139 each bind GTP; these read DCPGH and NKCD. Residues 136-139 are G4; that stretch reads NKCD. The interval 174-176 is G5; that stretch reads SAL.

This sequence belongs to the TRAFAC class translation factor GTPase superfamily. Classic translation factor GTPase family. EF-Tu/EF-1A subfamily. As to quaternary structure, monomer.

It is found in the cytoplasm. The enzyme catalyses GTP + H2O = GDP + phosphate + H(+). GTP hydrolase that promotes the GTP-dependent binding of aminoacyl-tRNA to the A-site of ribosomes during protein biosynthesis. This chain is Elongation factor Tu, found in Blochmanniella floridana.